A 212-amino-acid chain; its full sequence is Adenylate kinase (212 aa).

10–15 (GAGKGT) contacts ATP. The NMP stretch occupies residues 30–59 (STGDMFRAAMANQTEMGRLAKSYIDKGELV). AMP-binding positions include threonine 31, arginine 36, 57–59 (ELV), 86–89 (GYPR), and glutamine 93. The LID stretch occupies residues 127–159 (GRIINRKTGETFHKVFNPPVDYKEEDYYQREDD). ATP-binding positions include arginine 128 and 137-138 (TF). AMP is bound by residues arginine 156 and arginine 167. An ATP-binding site is contributed by glutamine 195.

This sequence belongs to the adenylate kinase family. As to quaternary structure, monomer.

The protein resides in the cytoplasm. The catalysed reaction is AMP + ATP = 2 ADP. It functions in the pathway purine metabolism; AMP biosynthesis via salvage pathway; AMP from ADP: step 1/1. Catalyzes the reversible transfer of the terminal phosphate group between ATP and AMP. Plays an important role in cellular energy homeostasis and in adenine nucleotide metabolism. In Streptococcus pyogenes serotype M3 (strain ATCC BAA-595 / MGAS315), this protein is Adenylate kinase.